A 100-amino-acid polypeptide reads, in one-letter code: NADH-quinone oxidoreductase subunit K (100 aa).

The next 3 helical transmembrane spans lie at 4-24 (LFHG…SLIV), 28-48 (ILFI…ALIV), and 60-80 (IMYI…LALL).

This sequence belongs to the complex I subunit 4L family. In terms of assembly, NDH-1 is composed of 13 different subunits. Subunits NuoA, H, J, K, L, M, N constitute the membrane sector of the complex.

Its subcellular location is the cell membrane. It carries out the reaction a quinone + NADH + 5 H(+)(in) = a quinol + NAD(+) + 4 H(+)(out). NDH-1 shuttles electrons from NADH, via FMN and iron-sulfur (Fe-S) centers, to quinones in the respiratory chain. The immediate electron acceptor for the enzyme in this species is believed to be ubiquinone. Couples the redox reaction to proton translocation (for every two electrons transferred, four hydrogen ions are translocated across the cytoplasmic membrane), and thus conserves the redox energy in a proton gradient. In Buchnera aphidicola subsp. Acyrthosiphon pisum (strain 5A), this protein is NADH-quinone oxidoreductase subunit K.